The sequence spans 238 residues: Deoxyribose-phosphate aldolase (238 aa).

Catalysis depends on D104, which acts as the Proton donor/acceptor. K168 (schiff-base intermediate with acetaldehyde) is an active-site residue. The active-site Proton donor/acceptor is K197.

Belongs to the DeoC/FbaB aldolase family. DeoC type 1 subfamily.

The protein resides in the cytoplasm. It catalyses the reaction 2-deoxy-D-ribose 5-phosphate = D-glyceraldehyde 3-phosphate + acetaldehyde. It participates in carbohydrate degradation; 2-deoxy-D-ribose 1-phosphate degradation; D-glyceraldehyde 3-phosphate and acetaldehyde from 2-deoxy-alpha-D-ribose 1-phosphate: step 2/2. Its function is as follows. Catalyzes a reversible aldol reaction between acetaldehyde and D-glyceraldehyde 3-phosphate to generate 2-deoxy-D-ribose 5-phosphate. The protein is Deoxyribose-phosphate aldolase of Bacteroides thetaiotaomicron (strain ATCC 29148 / DSM 2079 / JCM 5827 / CCUG 10774 / NCTC 10582 / VPI-5482 / E50).